Here is a 396-residue protein sequence, read N- to C-terminus: Ornithine aminotransferase (396 aa).

At Lys255 the chain carries N6-(pyridoxal phosphate)lysine.

This sequence belongs to the class-III pyridoxal-phosphate-dependent aminotransferase family. OAT subfamily. Requires pyridoxal 5'-phosphate as cofactor.

It localises to the cytoplasm. The catalysed reaction is a 2-oxocarboxylate + L-ornithine = L-glutamate 5-semialdehyde + an L-alpha-amino acid. The protein operates within amino-acid biosynthesis; L-proline biosynthesis; L-glutamate 5-semialdehyde from L-ornithine: step 1/1. Its function is as follows. Catalyzes the interconversion of ornithine to glutamate semialdehyde. The sequence is that of Ornithine aminotransferase from Bacillus anthracis (strain A0248).